The sequence spans 491 residues: Probable malate:quinone oxidoreductase (491 aa).

Belongs to the MQO family. FAD serves as cofactor.

It catalyses the reaction (S)-malate + a quinone = a quinol + oxaloacetate. Its pathway is carbohydrate metabolism; tricarboxylic acid cycle; oxaloacetate from (S)-malate (quinone route): step 1/1. The protein is Probable malate:quinone oxidoreductase of Actinobacillus pleuropneumoniae serotype 7 (strain AP76).